The primary structure comprises 481 residues: 4-hydroxyphenylacetate 3-monooxygenase oxygenase component (481 aa).

Residues 100–104 (RSPDY) and H142 contribute to the substrate site. FAD is bound by residues 142 to 144 (HAL), 148 to 151 (QVNR), and T185. 197-198 (ST) serves as a coordination point for substrate. 444-447 (DPVR) is a binding site for FAD.

The protein belongs to the FADH(2)-utilizing monooxygenase family. As to quaternary structure, homotetramer consisting of a dimer of dimers. 4-HPA 3-monooxygenase consists of a reductase component HpaC and an oxygenase component HpaB.

It carries out the reaction 4-hydroxyphenylacetate + FADH2 + O2 = 3,4-dihydroxyphenylacetate + FAD + H2O + H(+). It functions in the pathway aromatic compound metabolism; 4-hydroxyphenylacetate degradation; pyruvate and succinate semialdehyde from 4-hydroxyphenylacetate: step 1/7. Its function is as follows. Utilizes FADH(2) supplied by HpaC, to catalyze the hydroxylation of 4-hydroxyphenylacetic acid, leading to the production of 3,4-dihydroxyphenylacetic acid (DHPA). The chain is 4-hydroxyphenylacetate 3-monooxygenase oxygenase component from Thermus thermophilus (strain ATCC 27634 / DSM 579 / HB8).